A 395-amino-acid chain; its full sequence is Phosphoglycerate kinase (395 aa).

Substrate-binding positions include 21–23 (DLN), Arg-36, 59–62 (HLGR), Arg-113, and Arg-146. Residues Lys-197, Glu-324, and 350–353 (GGDT) each bind ATP.

It belongs to the phosphoglycerate kinase family. Monomer.

Its subcellular location is the cytoplasm. It carries out the reaction (2R)-3-phosphoglycerate + ATP = (2R)-3-phospho-glyceroyl phosphate + ADP. The protein operates within carbohydrate degradation; glycolysis; pyruvate from D-glyceraldehyde 3-phosphate: step 2/5. This Acinetobacter baumannii (strain AB307-0294) protein is Phosphoglycerate kinase.